The chain runs to 142 residues: Aspartate 1-decarboxylase (142 aa).

Residue serine 25 is the Schiff-base intermediate with substrate; via pyruvic acid of the active site. Serine 25 carries the post-translational modification Pyruvic acid (Ser). Substrate is bound at residue threonine 57. Tyrosine 58 serves as the catalytic Proton donor. 73 to 75 (GAA) is a substrate binding site.

This sequence belongs to the PanD family. In terms of assembly, heterooctamer of four alpha and four beta subunits. Pyruvate serves as cofactor. Is synthesized initially as an inactive proenzyme, which is activated by self-cleavage at a specific serine bond to produce a beta-subunit with a hydroxyl group at its C-terminus and an alpha-subunit with a pyruvoyl group at its N-terminus.

The protein localises to the cytoplasm. It catalyses the reaction L-aspartate + H(+) = beta-alanine + CO2. The protein operates within cofactor biosynthesis; (R)-pantothenate biosynthesis; beta-alanine from L-aspartate: step 1/1. In terms of biological role, catalyzes the pyruvoyl-dependent decarboxylation of aspartate to produce beta-alanine. This is Aspartate 1-decarboxylase from Arthrobacter sp. (strain FB24).